Consider the following 262-residue polypeptide: uncharacterized protein (262 aa).

Residues 1-22 (MMNNSITLLLALLVGLVGFAFT) form the signal peptide.

It belongs to the IIV-6 117L family.

This is an uncharacterized protein from Aedes vexans (Inland floodwater mosquito).